The following is a 629-amino-acid chain: DNA-directed RNA polymerase III subunit rpc3 (629 aa).

Disordered regions lie at residues A136–Q164, P247–Y294, and Q373–N420. Over residues R257–T268 the composition is skewed to basic and acidic residues. Residues S272–G293 are compositionally biased toward acidic residues. Polar residues predominate over residues L374–P388. Residues D389–A409 show a composition bias toward basic and acidic residues. The leucine-zipper stretch occupies residues T556–F577.

Belongs to the RNA polymerase beta chain family. Component of the RNA polymerase III (Pol III) complex consisting of 17 subunits.

The protein resides in the nucleus. In terms of biological role, DNA-dependent RNA polymerase catalyzes the transcription of DNA into RNA using the four ribonucleoside triphosphates as substrates. Specific core component of RNA polymerase III which synthesizes small RNAs, such as 5S rRNA and tRNAs. The chain is DNA-directed RNA polymerase III subunit rpc3 (rpc82) from Aspergillus fumigatus (strain ATCC MYA-4609 / CBS 101355 / FGSC A1100 / Af293) (Neosartorya fumigata).